The sequence spans 781 residues: MATWMEGKYVARGQFTGECIAVLTSGGDAQGMNAAVRAVVRMGIYCGCRVFFIREGYQGLVDGGQNIQEASWADVSGILQLGGTKIGSARCMDFRERYGRLKAAENLVKNQITNLVVIGGDGSLTGANLFRAEWSSLLEELVTSNKISAESAKQFHRLNIVGLVGSIDNDFCGTDMTIGADSALHRIIEATDAISTTAHSHQRCFILEVMGRHCGYLALVASMACEADWVFIPEMPPTDDWREKLCHKLRMNREHGQRVNIIMVAEGAIDRACKPITCEIVKNLIVSELQLDTRITVLGHVQRGGSPSAFDRILGSRMGAEAVLALMDADRDPNLPSCVISLDGNQAVRVPLVKCVDRTRQVAEAMKACDFDHAVELRGTSFMNNLATYIKLSKIEQPRQSVMSSENNLRIGIVNVGAPACGINAVIRGFTRLGITKGYKVIGIHEGFSGLVKGDASEIQWADVRGWVGMGGSMLGTRRDTPNGLGIDKVAAKFKELKLSGLLIIGGFEAYECMIELVEGREKYPELCIPMAMVPATISNNVPGTDFSLGCDTALNEITSVLDKIKQSALGTKRRVFVVETMGGYCGYLATMSALAGGADAAYIFEEPFTIDDLREDVVHLRAKIDDNVKRGLVLRADMLINTITSEFIHQLYAQEGQGIFDCRCNVLGHMQQGDRPSPFDRSLGTKFASKAIDWLDEQINANIVQILQSIHQTFMLYINWYCTSSDNLFKYSLELREHTDFVHRLPKEEWWLSLRPLMRIMAKHDSLYESESIMAGTDRK.

Positions 1 to 394 (MATWMEGKYV…NLATYIKLSK (394 aa)) are N-terminal catalytic PFK domain 1. ATP-binding positions include glycine 27, 90 to 91 (RC), and 120 to 123 (GDGS). Residue aspartate 121 coordinates Mg(2+). Residues 166–168 (SID), arginine 203, 210–212 (MGR), glutamate 266, arginine 294, and 300–303 (HVQR) each bind substrate. Aspartate 168 acts as the Proton acceptor in catalysis. Residues 395-409 (IEQPRQSVMSSENNL) form an interdomain linker region. The tract at residues 410–781 (RIGIVNVGAP…ESIMAGTDRK (372 aa)) is C-terminal regulatory PFK domain 2. Residues arginine 479, 537-541 (TISNN), arginine 575, 582-584 (MGG), aspartate 638, arginine 664, 670-673 (HMQQ), and arginine 745 each bind beta-D-fructose 2,6-bisphosphate.

It belongs to the phosphofructokinase type A (PFKA) family. ATP-dependent PFK group I subfamily. Eukaryotic two domain clade 'E' sub-subfamily. In terms of assembly, homotetramer. Requires Mg(2+) as cofactor.

The protein resides in the cytoplasm. It carries out the reaction beta-D-fructose 6-phosphate + ATP = beta-D-fructose 1,6-bisphosphate + ADP + H(+). It participates in carbohydrate degradation; glycolysis; D-glyceraldehyde 3-phosphate and glycerone phosphate from D-glucose: step 3/4. With respect to regulation, allosterically activated by ADP, AMP, or fructose 2,6-bisphosphate, and allosterically inhibited by ATP or citrate. Its function is as follows. Catalyzes the phosphorylation of D-fructose 6-phosphate to fructose 1,6-bisphosphate by ATP, the first committing step of glycolysis. This chain is ATP-dependent 6-phosphofructokinase (PFK), found in Schistosoma mansoni (Blood fluke).